We begin with the raw amino-acid sequence, 477 residues long: GH30 family xylanase (477 aa).

The N-terminal stretch at 1–19 (MYSLLIALLCAGTAVDAQA) is a signal peptide. Asn-194, Asn-237, and Asn-331 each carry an N-linked (GlcNAc...) asparagine glycan.

Belongs to the glycosyl hydrolase 30 family.

The protein localises to the secreted. Activity is enhanced by 10 mM Co(2+), Cu 2(2+) and Mn(2+) to levels as high as 44%. Partial inhibition of activity from 5 to 15% is observed in the presence of the following compouinds at a centration of 10 mM (from higher inhibition to lower): EDTA &gt; Mg(2+) &gt; urea, Zn(2+) &gt; Fe(3+). Functionally, xylanase exhibiting endo- and exo-xylanase activity. Shows the highest activity toward beechwood glucuronoxylan, which consists of a beta-1,4-linked xylose backbone decorated with the methylated form of D-glucuronic acid (MeGlcA) attached directly to the main chain at xylose C2. Also acts against wheat arabinoxylan, a xylan without MeGlcA substituents along the main chain, but the xylanase activity is about two orders of magnitude lower than that achieved in the case of beechwood xylan. Shows no activity against carob galactomannan, konjac glucomannan, or barley beta-glucan. The recombinant xylanase also exhibits an exo-activity by releasing processively disaccharide units from the non-reducing end of linear and decorated xylooligosaccharides (XOS). In Thermothelomyces thermophilus (strain ATCC 42464 / BCRC 31852 / DSM 1799) (Sporotrichum thermophile), this protein is GH30 family xylanase.